The following is a 335-amino-acid chain: Trans-1,2-dihydrobenzene-1,2-diol dehydrogenase (335 aa).

The protein belongs to the Gfo/Idh/MocA family. Homodimer. As to expression, liver, lens, spleen, kidney and small intestine.

The catalysed reaction is (1R,2R)-1,2-dihydrobenzene-1,2-diol + NADP(+) = catechol + NADPH + H(+). The enzyme catalyses D-xylose + NADP(+) = D-xylono-1,5-lactone + NADPH + H(+). Its activity is regulated as follows. Strongly inhibited by isoascorbic acid, 4-hydroxyacetophenone and chloromercuriphenylsulphonate. Stimulated by various salts. In Sus scrofa (Pig), this protein is Trans-1,2-dihydrobenzene-1,2-diol dehydrogenase (DHDH).